The sequence spans 209 residues: Superoxide dismutase [Mn/Fe] (209 aa).

The Fe(3+) site is built by His-38, His-90, Asp-172, and His-176. Mn(2+) contacts are provided by His-38, His-90, Asp-172, and His-176.

Belongs to the iron/manganese superoxide dismutase family. It depends on Mn(2+) as a cofactor. Requires Fe(3+) as cofactor.

It carries out the reaction 2 superoxide + 2 H(+) = H2O2 + O2. Its function is as follows. Destroys superoxide anion radicals which are normally produced within the cells and which are toxic to biological systems. Catalyzes the dismutation of superoxide anion radicals into O2 and H2O2 by successive reduction and oxidation of the transition metal ion at the active site. This chain is Superoxide dismutase [Mn/Fe] (sodB), found in Rickettsia typhi (strain ATCC VR-144 / Wilmington).